The primary structure comprises 504 residues: Glycerol kinase (504 aa).

Thr12 serves as a coordination point for ADP. ATP is bound by residues Thr12, Thr13, and Ser14. Thr12 contributes to the sn-glycerol 3-phosphate binding site. Residue Arg16 participates in ADP binding. Positions 82, 83, 134, and 246 each coordinate sn-glycerol 3-phosphate. Residues Arg82, Glu83, Tyr134, Asp246, and Gln247 each contribute to the glycerol site. ADP-binding residues include Thr268 and Gly312. 4 residues coordinate ATP: Thr268, Gly312, Gln316, and Gly413. Residues Gly413 and Asn417 each contribute to the ADP site.

This sequence belongs to the FGGY kinase family.

The enzyme catalyses glycerol + ATP = sn-glycerol 3-phosphate + ADP + H(+). Its pathway is polyol metabolism; glycerol degradation via glycerol kinase pathway; sn-glycerol 3-phosphate from glycerol: step 1/1. Its activity is regulated as follows. Inhibited by fructose 1,6-bisphosphate (FBP). Its function is as follows. Key enzyme in the regulation of glycerol uptake and metabolism. Catalyzes the phosphorylation of glycerol to yield sn-glycerol 3-phosphate. This chain is Glycerol kinase, found in Pseudarthrobacter chlorophenolicus (strain ATCC 700700 / DSM 12829 / CIP 107037 / JCM 12360 / KCTC 9906 / NCIMB 13794 / A6) (Arthrobacter chlorophenolicus).